Reading from the N-terminus, the 308-residue chain is Baculoviral IAP repeat-containing protein bir-2 (308 aa).

BIR repeat units lie at residues 27–98 (RFAS…EFVM) and 170–241 (RLAT…DFIK). 8 residues coordinate Zn(2+): cysteine 68, cysteine 71, histidine 87, cysteine 94, cysteine 211, cysteine 214, histidine 230, and cysteine 237.

Belongs to the IAP family.

This chain is Baculoviral IAP repeat-containing protein bir-2, found in Caenorhabditis elegans.